A 954-amino-acid polypeptide reads, in one-letter code: SWI/SNF-related matrix-associated actin-dependent regulator of chromatin subfamily A-like protein 1 (954 aa).

Disordered stretches follow at residues 1-20 (MSLP…RQKA) and 27-238 (KLLA…NSQK). Ser-2 bears the N-acetylserine mark. Positions 3–34 (LPLTEEQRKKIEENRQKALARRAEKLLAEQHQ) form a coiled coil. The interval 5–30 (LTEEQRKKIEENRQKALARRAEKLLA) is mediates interaction with RPA2. The segment covering 7 to 20 (EEQRKKIEENRQKA) has biased composition (basic and acidic residues). The span at 72 to 83 (KQQNLSSSSNAD) shows a compositional bias: polar residues. Phosphoserine is present on residues Ser-112, Ser-123, Ser-129, and Ser-151. Polar residues-rich tracts occupy residues 171–183 (KSSQ…SSGQ) and 197–238 (ASPS…NSQK). At Ser-198 the chain carries Phosphoserine. 2 consecutive HARP domains span residues 226 to 303 (SGSS…QPLE) and 327 to 398 (SLSF…DPLP). The region spanning 445 to 600 (NFAIAKGGRL…YTQIIAVKPT (156 aa)) is the Helicase ATP-binding domain. 458–465 (DDMGLGKT) provides a ligand contact to ATP. A DESH box motif is present at residues 549–552 (DESH). A Nuclear localization signal motif is present at residues 644-661 (RRLKSDVLSQLPAKQRKI). The region spanning 716–869 (YILDLLESGR…ETNFSEMTES (154 aa)) is the Helicase C-terminal domain. The segment at 904–934 (ESFDPGSASGTSGSSSQNMGDTLDESSLTAS) is disordered. A compositionally biased stretch (low complexity) spans 909 to 919 (GSASGTSGSSS). The segment covering 920 to 934 (QNMGDTLDESSLTAS) has biased composition (polar residues).

This sequence belongs to the SNF2/RAD54 helicase family. SMARCAL1 subfamily. In terms of assembly, interacts with RPA2; the interaction is direct and mediates the recruitment by the RPA complex of SMARCAL1 to sites of DNA damage. In terms of processing, DNA damage-regulated phosphorylation by kinases that may include ATM, ATR and PRKDC. Ubiquitously expressed, with high levels in testis.

The protein resides in the nucleus. It carries out the reaction ATP + H2O = ADP + phosphate + H(+). ATP-dependent annealing helicase that binds selectively to fork DNA relative to ssDNA or dsDNA and catalyzes the rewinding of the stably unwound DNA. Rewinds single-stranded DNA bubbles that are stably bound by replication protein A (RPA). Acts throughout the genome to reanneal stably unwound DNA, performing the opposite reaction of many enzymes, such as helicases and polymerases, that unwind DNA. May play an important role in DNA damage response by acting at stalled replication forks. In Homo sapiens (Human), this protein is SWI/SNF-related matrix-associated actin-dependent regulator of chromatin subfamily A-like protein 1.